The primary structure comprises 230 residues: Heptaprenylglyceryl phosphate synthase (230 aa).

A sn-glycerol 1-phosphate-binding site is contributed by lysine 12. Mg(2+)-binding residues include aspartate 14 and threonine 40. Sn-glycerol 1-phosphate is bound by residues 159–164, glycine 189, and 209–210; these read YIEYSG and GD.

Belongs to the GGGP/HepGP synthase family. Group I subfamily. Homodimer. Requires Mg(2+) as cofactor.

It carries out the reaction sn-glycerol 1-phosphate + all-trans-heptaprenyl diphosphate = 3-heptaprenyl-sn-glycero-1-phosphate + diphosphate. Its pathway is membrane lipid metabolism; glycerophospholipid metabolism. Functionally, prenyltransferase that catalyzes in vivo the transfer of the heptaprenyl moiety of heptaprenyl pyrophosphate (HepPP; 35 carbon atoms) to the C3 hydroxyl of sn-glycerol-1-phosphate (G1P), producing heptaprenylglyceryl phosphate (HepGP). This reaction is an ether-bond-formation step in the biosynthesis of archaea-type G1P-based membrane lipids found in Bacillales. In Staphylococcus aureus (strain JH1), this protein is Heptaprenylglyceryl phosphate synthase.